A 906-amino-acid polypeptide reads, in one-letter code: Protein translocase subunit SecA (906 aa).

ATP is bound by residues Gln87, 105–109, and Asp513; that span reads GEGKT. A disordered region spans residues 860–906; that stretch reads QVNKGEVVSDENTGDDTFVRNEKKVGRNEPCPCGSGKKYKQCHGKLD. Positions 876–886 are enriched in basic and acidic residues; sequence TFVRNEKKVGR. Positions 890, 892, 901, and 902 each coordinate Zn(2+). The segment covering 896–906 has biased composition (basic residues); the sequence is KKYKQCHGKLD.

This sequence belongs to the SecA family. In terms of assembly, monomer and homodimer. Part of the essential Sec protein translocation apparatus which comprises SecA, SecYEG and auxiliary proteins SecDF-YajC and YidC. Requires Zn(2+) as cofactor.

It is found in the cell inner membrane. Its subcellular location is the cytoplasm. The enzyme catalyses ATP + H2O + cellular proteinSide 1 = ADP + phosphate + cellular proteinSide 2.. Part of the Sec protein translocase complex. Interacts with the SecYEG preprotein conducting channel. Has a central role in coupling the hydrolysis of ATP to the transfer of proteins into and across the cell membrane, serving both as a receptor for the preprotein-SecB complex and as an ATP-driven molecular motor driving the stepwise translocation of polypeptide chains across the membrane. This chain is Protein translocase subunit SecA, found in Psychromonas ingrahamii (strain DSM 17664 / CCUG 51855 / 37).